Here is a 493-residue protein sequence, read N- to C-terminus: Glutathione hydrolase 6 (493 aa).

The Cytoplasmic portion of the chain corresponds to 1 to 54 (MERAEEPVVYQKLLPWEPSLESEEEVEEEETSEALVLNPRRHQDSSRNKAGGLP). Residues 19–52 (SLESEEEVEEEETSEALVLNPRRHQDSSRNKAGG) are disordered. Over residues 20–32 (LESEEEVEEEETS) the composition is skewed to acidic residues. Residues 55 to 75 (GTWARVVAALLLLAVGCSLAV) form a helical; Signal-anchor for type II membrane protein membrane-spanning segment. At 76–493 (RQLQNQGRST…PHACCPFQGF (418 aa)) the chain is on the extracellular side. The interval 83 to 105 (RSTGSLGSVAPPPGGHSHGPGVY) is disordered. Residues Asn161 and Asn370 are each glycosylated (N-linked (GlcNAc...) asparagine). The segment covering 442–455 (PPTQAQHQHQGQQE) has biased composition (low complexity). The tract at residues 442–464 (PPTQAQHQHQGQQEPTEHPSTCG) is disordered.

It belongs to the gamma-glutamyltransferase family. Heterodimer composed of the light and heavy chains. The active site is located in the light chain. Post-translationally, cleaved by autocatalysis into a large and a small subunit and the autocatalytic cleavage is essential to the functional activation of the enzyme.

It localises to the membrane. The catalysed reaction is an N-terminal (5-L-glutamyl)-[peptide] + an alpha-amino acid = 5-L-glutamyl amino acid + an N-terminal L-alpha-aminoacyl-[peptide]. The enzyme catalyses glutathione + H2O = L-cysteinylglycine + L-glutamate. It catalyses the reaction an S-substituted glutathione + H2O = an S-substituted L-cysteinylglycine + L-glutamate. It participates in sulfur metabolism; glutathione metabolism. Its function is as follows. Hydrolyzes and transfers gamma-glutamyl moieties from glutathione and other gamma-glutamyl compounds to acceptors. In Homo sapiens (Human), this protein is Glutathione hydrolase 6.